Reading from the N-terminus, the 91-residue chain is Kazal-type trypsin inhibitor (91 aa).

The first 22 residues, 1-22 (MRHIGVFVGVLALALVLLVVEA), serve as a signal peptide directing secretion. Residues 25–78 (DAERGVCACPRIYMPVCGSNLKTYNNDCLLRCEINSDLGRANNLRKIADQACDN) enclose the Kazal-like domain. Disulfide bonds link cysteine 31/cysteine 56, cysteine 33/cysteine 52, and cysteine 41/cysteine 76. A glycan (N-linked (GlcNAc...) asparagine) is linked at asparagine 78.

As to quaternary structure, interacts with human PLG (plasmin). Female salivary gland. Female gut at 3 and 24 hours after blood feeding. Female carcass. Male tissues. Not detected in ovary and fat body at 3 and 24 hours after blood feeding.

It localises to the secreted. Functionally, anticoagulant protein that decreases host thrombin (F2) activity via an uncompetitive inhibition mechanism. Inhibits amidolytic activity of host plasmin (PLG). Inhibits amidolytic activity of host trypsin. Inhibits trypsin-like endogenous activity from gut of female mosquitoes 24 hours after feeding and weakly affects enzyme activity from gut 3 hours after feeding, suggesting a possible role as an inhibitor of endogenous proteases. (Microbial infection) Limits host plasmin-mediated enhancement of dengue virus type 2 infection in mosquito midgut. This is Kazal-type trypsin inhibitor from Aedes aegypti (Yellowfever mosquito).